A 490-amino-acid chain; its full sequence is MVLWLQLALLALLLPTSLAQGEVRGKGTAQAHNSTRPALQRLSDHLLADYRKSVRPVRDWRKPTTVSIDAIVYAILSVDEKNQVLTTYIWYRQFWTDEFLQWNPEDFDNITKLSIPTDSIWVPDILINEFVDVGKSPNIPYVYVRHQGEVQNYKPLQVVTACSLDIYNFPFDVQNCSLTFTSWLHTIQDINISLWRLPEKVKSDKSVFMNQGEWELLGVLTEFLEFSDRESRGSFAEMKFYVVIRRRPLFYAVTLLLPSIFLMIVDIVGFYLPPDSGERVSFKITLLLGYSVFLIIVSDTLPATAIGTPLISVYFVVCMALLVISLAETILIVRLVHKQDLQQPVPLWLRHLVLERIAGLLCLGEQLTSHRGPATLQATKTDDFSGSTLLPAMGNHCGPLGGPQDLEKTSRGRGSPPPPPREASLAMCGLLQELASIRHFLEKREETREVARDWLRVGSVLDKLLFRVYLLAVLAYSITLVTLWSVWHYA.

The signal sequence occupies residues 1–19 (MVLWLQLALLALLLPTSLA). Residues 20–249 (QGEVRGKGTA…FYVVIRRRPL (230 aa)) are Extracellular-facing. N-linked (GlcNAc...) asparagine glycans are attached at residues N33, N109, N175, and N191. Residues C162 and C176 are joined by a disulfide bond. Residues 250-270 (FYAVTLLLPSIFLMIVDIVGF) traverse the membrane as a helical segment. Residues 271–285 (YLPPDSGERVSFKIT) are Cytoplasmic-facing. The helical transmembrane segment at 286–306 (LLLGYSVFLIIVSDTLPATAI) threads the bilayer. The Extracellular segment spans residues 307–312 (GTPLIS). The helical transmembrane segment at 313–333 (VYFVVCMALLVISLAETILIV) threads the bilayer. The Cytoplasmic portion of the chain corresponds to 334 to 467 (RLVHKQDLQQ…GSVLDKLLFR (134 aa)). Residues 401–422 (GGPQDLEKTSRGRGSPPPPPRE) form a disordered region. Residues 426–462 (AMCGLLQELASIRHFLEKREETREVARDWLRVGSVLD) form an HA-stretch; determines single-channel conductance in 5-HT3 receptors region. Residues 468–488 (VYLLAVLAYSITLVTLWSVWH) traverse the membrane as a helical segment. Residues 489-490 (YA) are Extracellular-facing.

This sequence belongs to the ligand-gated ion channel (TC 1.A.9) family. 5-hydroxytryptamine receptor (TC 1.A.9.2) subfamily. HTR3A sub-subfamily. In terms of assembly, forms homopentameric as well as heteropentameric serotonin-activated cation-selective channel complexes with HTR3B or HTR3C or HTR3D or HTR3E. The homomeric complex is functional but exhibits low conductance with modified voltage dependence, and decreased agonist and antagonist affinity. Heteropentameric complexes display properties which resemble that of neuronal serotonin-activated channels in vivo. Interacts with RIC3. Expressed in cortex, intestine and liver. Not expressed in muscle or spleen.

The protein localises to the postsynaptic cell membrane. The protein resides in the cell membrane. The enzyme catalyses Na(+)(in) = Na(+)(out). It catalyses the reaction K(+)(in) = K(+)(out). The catalysed reaction is Ca(2+)(in) = Ca(2+)(out). It carries out the reaction Mg(2+)(in) = Mg(2+)(out). In terms of biological role, forms serotonin (5-hydroxytryptamine/5-HT3)-activated cation-selective channel complexes, which when activated cause fast, depolarizing responses in neurons. This is 5-hydroxytryptamine receptor 3A from Cavia porcellus (Guinea pig).